A 330-amino-acid chain; its full sequence is Small ribosomal subunit protein uS2 (330 aa).

This sequence belongs to the universal ribosomal protein uS2 family.

This is Small ribosomal subunit protein uS2 from Bradyrhizobium sp. (strain BTAi1 / ATCC BAA-1182).